Reading from the N-terminus, the 252-residue chain is Small ribosomal subunit protein uS2 (252 aa).

Belongs to the universal ribosomal protein uS2 family.

The protein is Small ribosomal subunit protein uS2 of Alcanivorax borkumensis (strain ATCC 700651 / DSM 11573 / NCIMB 13689 / SK2).